We begin with the raw amino-acid sequence, 160 residues long: uncharacterized protein (160 aa).

Residues 27–47 (VMNSYFIAGCGPAVCYYAVSW) form a helical membrane-spanning segment.

The protein resides in the membrane. This is an uncharacterized protein from Homo sapiens (Human).